Reading from the N-terminus, the 96-residue chain is Putative pterin-4-alpha-carbinolamine dehydratase (96 aa).

This sequence belongs to the pterin-4-alpha-carbinolamine dehydratase family.

The enzyme catalyses (4aS,6R)-4a-hydroxy-L-erythro-5,6,7,8-tetrahydrobiopterin = (6R)-L-erythro-6,7-dihydrobiopterin + H2O. The sequence is that of Putative pterin-4-alpha-carbinolamine dehydratase from Herpetosiphon aurantiacus (strain ATCC 23779 / DSM 785 / 114-95).